The chain runs to 512 residues: Catalase (512 aa).

Residues His-60 and Asn-133 contribute to the active site. Tyr-344 serves as a coordination point for heme. At Ser-363 the chain carries Phosphoserine. Basic and acidic residues predominate over residues 488 to 505; sequence EVKKMEEKAPKPINKGEP. Positions 488–512 are disordered; the sequence is EVKKMEEKAPKPINKGEPHMFQGSS.

The protein belongs to the catalase family. Heme serves as cofactor.

The protein resides in the peroxisome matrix. The catalysed reaction is 2 H2O2 = O2 + 2 H2O. Its function is as follows. Catalyzes the degradation of hydrogen peroxide (H(2)O(2)) generated by peroxisomal oxidases to water and oxygen, thereby protecting cells from the toxic effects of hydrogen peroxide. In Schizosaccharomyces pombe (strain 972 / ATCC 24843) (Fission yeast), this protein is Catalase (cta1).